We begin with the raw amino-acid sequence, 468 residues long: UDP-N-acetylmuramate--L-alanine ligase (468 aa).

Residue 114–120 participates in ATP binding; sequence GTHGKTT.

The protein belongs to the MurCDEF family.

It is found in the cytoplasm. The enzyme catalyses UDP-N-acetyl-alpha-D-muramate + L-alanine + ATP = UDP-N-acetyl-alpha-D-muramoyl-L-alanine + ADP + phosphate + H(+). It participates in cell wall biogenesis; peptidoglycan biosynthesis. Its function is as follows. Cell wall formation. The sequence is that of UDP-N-acetylmuramate--L-alanine ligase from Methylorubrum extorquens (strain PA1) (Methylobacterium extorquens).